We begin with the raw amino-acid sequence, 467 residues long: Serine/threonine-protein kinase AFC1 (467 aa).

The region spanning 115–443 (YQILSKMGEG…AREALNHPFF (329 aa)) is the Protein kinase domain. Residues 121 to 129 (MGEGTFGQV) and Lys144 contribute to the ATP site. The active-site Proton acceptor is Asp240. The tract at residues 447-467 (REQSIPPFNPNPHPFLYNQKN) is disordered.

It belongs to the protein kinase superfamily. CMGC Ser/Thr protein kinase family. Lammer subfamily.

It carries out the reaction L-seryl-[protein] + ATP = O-phospho-L-seryl-[protein] + ADP + H(+). The enzyme catalyses L-threonyl-[protein] + ATP = O-phospho-L-threonyl-[protein] + ADP + H(+). It catalyses the reaction L-tyrosyl-[protein] + ATP = O-phospho-L-tyrosyl-[protein] + ADP + H(+). In terms of biological role, activator of yeast transcription factor, STE12. This chain is Serine/threonine-protein kinase AFC1 (AFC1), found in Arabidopsis thaliana (Mouse-ear cress).